A 254-amino-acid polypeptide reads, in one-letter code: Geranylgeranylglyceryl phosphate synthase (254 aa).

2 residues coordinate Mg(2+): aspartate 28 and serine 57. Residues 176-182, 207-208, and 229-230 each bind sn-glycerol 1-phosphate; these read YLEAGSG, GG, and GT.

Belongs to the GGGP/HepGP synthase family. Group II subfamily. Requires Mg(2+) as cofactor.

It localises to the cytoplasm. It carries out the reaction sn-glycerol 1-phosphate + (2E,6E,10E)-geranylgeranyl diphosphate = sn-3-O-(geranylgeranyl)glycerol 1-phosphate + diphosphate. Its pathway is membrane lipid metabolism; glycerophospholipid metabolism. In terms of biological role, prenyltransferase that catalyzes the transfer of the geranylgeranyl moiety of geranylgeranyl diphosphate (GGPP) to the C3 hydroxyl of sn-glycerol-1-phosphate (G1P). This reaction is the first ether-bond-formation step in the biosynthesis of archaeal membrane lipids. This is Geranylgeranylglyceryl phosphate synthase from Pyrococcus horikoshii (strain ATCC 700860 / DSM 12428 / JCM 9974 / NBRC 100139 / OT-3).